The sequence spans 246 residues: Chemokine-binding protein (246 aa).

Residues 108-125 (SESSDGNTVNTRLSSVSP) show a composition bias toward polar residues. Positions 108–132 (SESSDGNTVNTRLSSVSPGQGKDSP) are disordered.

The protein belongs to the orthopoxvirus OPG001 family.

The protein resides in the secreted. Its function is as follows. Inhibits host immune defense by binding to host chemokines. Binds host CC chemokines (beta chemokines) such as RANTES with high affinity, but not CXC or C chemokines (alpha and gamma chemokines). The sequence is that of Chemokine-binding protein (OPG001) from Monkeypox virus.